A 241-amino-acid polypeptide reads, in one-letter code: 7-cyano-7-deazaguanine synthase (241 aa).

9-19 is an ATP binding site; that stretch reads LSGGLDSSTVL. 4 residues coordinate Zn(2+): Cys189, Cys197, Cys200, and Cys203.

This sequence belongs to the QueC family. Requires Zn(2+) as cofactor.

It carries out the reaction 7-carboxy-7-deazaguanine + NH4(+) + ATP = 7-cyano-7-deazaguanine + ADP + phosphate + H2O + H(+). Its pathway is purine metabolism; 7-cyano-7-deazaguanine biosynthesis. Functionally, catalyzes the ATP-dependent conversion of 7-carboxy-7-deazaguanine (CDG) to 7-cyano-7-deazaguanine (preQ(0)). This Thermoplasma volcanium (strain ATCC 51530 / DSM 4299 / JCM 9571 / NBRC 15438 / GSS1) protein is 7-cyano-7-deazaguanine synthase.